A 306-amino-acid chain; its full sequence is Putative S-adenosyl-L-methionine-dependent methyltransferase MAP_4190c (306 aa).

S-adenosyl-L-methionine contacts are provided by residues aspartate 129 and 158 to 159 (DL).

Belongs to the UPF0677 family.

Functionally, exhibits S-adenosyl-L-methionine-dependent methyltransferase activity. The chain is Putative S-adenosyl-L-methionine-dependent methyltransferase MAP_4190c from Mycolicibacterium paratuberculosis (strain ATCC BAA-968 / K-10) (Mycobacterium paratuberculosis).